Consider the following 328-residue polypeptide: Glutathionyl-hydroquinone reductase YqjG (328 aa).

The active-site Nucleophile is the Cys63. Residues Trp96, 130-133 (RVTV), and 148-149 (ES) each bind glutathione. A GST C-terminal domain is found at 172-296 (PPALQTKIDE…VNFDHIRNHY (125 aa)). Residue Tyr195 is the Proton donor/acceptor of the active site. Residues 203–311 (QEAYDEAVAK…TINPTGIISI (109 aa)) are dimerization.

The protein belongs to the GST superfamily. Xi-class GSH transferase family. Homodimer.

The enzyme catalyses 2-(glutathione-S-yl)-hydroquinone + glutathione = hydroquinone + glutathione disulfide. Catalyzes glutathione (GSH)-dependent reduction of glutathionyl-hydroquinones (GS-HQs) to the corresponding hydroquinones. Can use a variety of GS-HQs as substrates, such as GS-p-hydroquinone (GS-HQ), GS-hydroxy-p-hydroquinone (GS-HHQ), GS-methyl-p-hydroquinone (GS-MHQ), GS-menadiol, and GS-trichloro-p-hydroquinone (GS-TriCH). Also displays GSH-dependent disulfide-bond reduction activity toward HED (2-hydroxyethyl disulfide), and is able to catalyze DMA (dimethylarsinate) reduction. Exhibits no GSH transferase activity with 1-chloro-2,4-dinitrobenzene (CDNB). This chain is Glutathionyl-hydroquinone reductase YqjG (yqjG), found in Escherichia coli (strain K12).